The sequence spans 119 residues: Thrombin-like enzyme TLBan (119 aa).

One can recognise a Peptidase S1 domain in the interval 1–112 (VIGGDECNIN…YLLWIQSIIA (112 aa)). Residues histidine 40 and aspartate 59 each act as charge relay system in the active site. Cysteine 54 and cysteine 118 are joined by a disulfide.

In terms of assembly, monomer. In terms of processing, contains both N-linked carbohydrates and sialic acid. Expressed by the venom gland.

It localises to the secreted. Its activity is regulated as follows. Strongly inhibited by PMSF and slightly inhibited by EDTA and soybean trypsin inhibitor. Its function is as follows. Thrombin-like snake venom serine protease, with high clotting activity in vitro. Also has fibrinogenolytic ability, showing a fast degradation of fibrinogen Aalpha chain (FGA), a slow degradation of Bbeta chain (FGB) and no degradation of gamma chain. Also causes platelet aggregation in platelet rich plasma (PRP) and washed platelet suspension. The protein is Thrombin-like enzyme TLBan of Bothrocophias andianus (Andean lancehead).